The following is a 241-amino-acid chain: NH(3)-dependent NAD(+) synthetase (241 aa).

An ATP-binding site is contributed by 29-36 (GISGGIDS). Asp35 contacts Mg(2+). Arg110 is a binding site for deamido-NAD(+). Mg(2+) is bound at residue Glu135. Residues Lys143 and Asp150 each contribute to the deamido-NAD(+) site. ATP contacts are provided by Lys159 and Ser181. 226–227 (HK) serves as a coordination point for deamido-NAD(+).

It belongs to the NAD synthetase family. Homodimer.

It carries out the reaction deamido-NAD(+) + NH4(+) + ATP = AMP + diphosphate + NAD(+) + H(+). It participates in cofactor biosynthesis; NAD(+) biosynthesis; NAD(+) from deamido-NAD(+) (ammonia route): step 1/1. In terms of biological role, catalyzes the ATP-dependent amidation of deamido-NAD to form NAD. Uses ammonia as a nitrogen source. This chain is NH(3)-dependent NAD(+) synthetase, found in Finegoldia magna (strain ATCC 29328 / DSM 20472 / WAL 2508) (Peptostreptococcus magnus).